The primary structure comprises 592 residues: Frizzled-5 (592 aa).

Residues 1–38 (MRKPADEHHFTMETSGMHLVGFWLHVLLLFQLSGLGDS) form the signal peptide. Residues 39 to 248 (ASKDIVCEPI…QDERTFTTFW (210 aa)) are Extracellular-facing. In terms of domain architecture, FZ spans 40 to 161 (SKDIVCEPIT…GDTDRLCMDR (122 aa)). 5 cysteine pairs are disulfide-bonded: C45/C106, C53/C99, C90/C128, C117/C158, and C121/C145. The disordered stretch occupies residues 162-192 (NSSETTTLSPPFPKPTPKGTPRHRATAKSAP). A helical membrane pass occupies residues 249 to 269 (IGLWSVLCFVSTFTTVATFLI). The Cytoplasmic segment spans residues 270-280 (DMERFKYPERP). A helical membrane pass occupies residues 281–301 (IIFLAACYLFVSLGYIVRLLA). Over 302–327 (GHERVACEGTGDQQHILYDTTGPALC) the chain is Extracellular. Residues 328–348 (TLVFLLIYFFGMASSIWWVVL) traverse the membrane as a helical segment. Residues 349–370 (SFTWFLAAGMKWGNEAIAGYSQ) lie on the Cytoplasmic side of the membrane. Residues 371 to 391 (YFHLAAWLVPSVKSIAVLALS) form a helical membrane-spanning segment. Over 392-414 (SVDGDPVAGICYVGNQSLEGLRG) the chain is Extracellular. A helical transmembrane segment spans residues 415–435 (FVLAPLVVYLFTGSLFLLAGF). Residues 436–461 (VSLFRIRSVIKQGGTKTDKLEKLMIR) lie on the Cytoplasmic side of the membrane. The chain crosses the membrane as a helical span at residues 462 to 482 (IGLFTVLYTVPATIVVACLVY). Over 483–512 (EQHYRPSWERALACSCPSERQRLGMGPDYA) the chain is Extracellular. Residues 513-533 (VFMLKYFMCLVVGITSGVWIW) traverse the membrane as a helical segment. The Cytoplasmic segment spans residues 534-592 (SGKTLESWRRFIARYVPCRTRKPPVSASSMYSEASTALTARAGTAPTGTYHKSAPSSHV).

Belongs to the G-protein coupled receptor Fz/Smo family.

The protein localises to the cell membrane. It localises to the golgi apparatus membrane. It is found in the synapse. The protein resides in the perikaryon. Its subcellular location is the cell projection. The protein localises to the dendrite. It localises to the axon. Its function is as follows. Receptor for Wnt proteins. Following binding, activates the canonical Wnt/beta-catenin signaling pathway. Also activates wnt non-canonical signaling. In neurons, activation of the Wnt pathway promotes formation of synapses. May be involved in transduction and intercellular transmission of polarity information during tissue morphogenesis and/or in differentiated tissues. Plays a role in early eye development, possibly through wnt non-canonical signaling. As a receptor for wnt11, promotes eye formation, at least partially, by antagonizing the Wnt/beta-catenin pathway. In addition, promotes coherence of eye field cells, potentially contributing to the coordinated morphogenetic behaviors of cells in the nascent eye field. This is Frizzled-5 (fzd5) from Danio rerio (Zebrafish).